An 83-amino-acid polypeptide reads, in one-letter code: MRSSSKKIDPSVHVLVPKHEVLSVEEAFKVLKELGIGPEQLPWMRASDPMARTINAKPGDIVKITRKSPIVGELVVYRYVVSG.

This sequence belongs to the archaeal Rpo5/eukaryotic RPB5 RNA polymerase subunit family. Part of the RNA polymerase complex.

Its subcellular location is the cytoplasm. The catalysed reaction is RNA(n) + a ribonucleoside 5'-triphosphate = RNA(n+1) + diphosphate. DNA-dependent RNA polymerase (RNAP) catalyzes the transcription of DNA into RNA using the four ribonucleoside triphosphates as substrates. The polypeptide is DNA-directed RNA polymerase subunit Rpo5 (Metallosphaera sedula (strain ATCC 51363 / DSM 5348 / JCM 9185 / NBRC 15509 / TH2)).